Consider the following 542-residue polypeptide: Signal peptide peptidase-like 5 (542 aa).

The first 23 residues, 1 to 23 (MAAATAAVFALLMASALAGAAAG), serve as a signal peptide directing secretion. The Lumenal segment spans residues 24-192 (GDIVHHDDEA…PDRPVVDTAE (169 aa)). Residues Asn79 and Asn145 are each glycosylated (N-linked (GlcNAc...) asparagine). One can recognise a PA domain in the interval 92 to 167 (CTSPKEKVSG…LPRDAGFALH (76 aa)). The helical transmembrane segment at 193-213 (VFLWLMAVGTVLCASYWSAWS) threads the bilayer. Residues 214–245 (AREALCEQEKLLKDGREVLLNVENGSSSGMID) are Cytoplasmic-facing. A helical transmembrane segment spans residues 246-266 (INVASAIMFVVVASCFLIMLY). At 267-275 (KMMSSWFVE) the chain is on the lumenal side. Residues 276–296 (LLVVIFCVGGVEGLQTCLVAL) form a helical membrane-spanning segment. At 297-316 (LSRWFRAASESFFKVPFFGA) the chain is on the cytoplasmic side. Residues 317–337 (VSYLTLAVSPFCIVFAVLWAV) form a helical membrane-spanning segment. Residues 338–342 (HRHFT) are Lumenal-facing. Residues 343–363 (YAWIGQDILGIALIITVIQIV) traverse the membrane as a helical segment. Topologically, residues 364–367 (RVPN) are cytoplasmic. The chain crosses the membrane as a helical span at residues 368 to 388 (LKVGSVLLSCAFFYDIFWVFV). Residue Asp382 is part of the active site. Residues 389-426 (SKRWFHESVMIVVARGDKTDEDGVPMLLKIPRMFDPWG) lie on the Lumenal side of the membrane. Residues 427 to 447 (GYSIIGFGDILLPGLLVAFAL) form a helical membrane-spanning segment. Asp435 is a catalytic residue. The Cytoplasmic segment spans residues 448–459 (RYDWAAKKSLQT). Residues 460–480 (GYFLWSMVAYGSGLLITYVAL) traverse the membrane as a helical segment. Residues 481 to 486 (NLMDGH) lie on the Lumenal side of the membrane. Residues 487-507 (GQPALLYIVPFTLGALISLGW) traverse the membrane as a helical segment. Positions 489-491 (PAL) match the PAL motif. Over 508–542 (KRGELWNLWSKGEPERVCPHHMHMQPQPKTPPLVQ) the chain is Cytoplasmic.

The protein belongs to the peptidase A22B family. In terms of processing, glycosylated.

It is found in the endosome membrane. Intramembrane-cleaving aspartic protease (I-CLiP) that cleaves type II membrane signal peptides in the hydrophobic plane of the membrane. The protein is Signal peptide peptidase-like 5 (SPPL5) of Oryza sativa subsp. japonica (Rice).